The chain runs to 447 residues: Na(+)-translocating NADH-quinone reductase subunit A (447 aa).

The protein belongs to the NqrA family. In terms of assembly, composed of six subunits; NqrA, NqrB, NqrC, NqrD, NqrE and NqrF.

It catalyses the reaction a ubiquinone + n Na(+)(in) + NADH + H(+) = a ubiquinol + n Na(+)(out) + NAD(+). Functionally, NQR complex catalyzes the reduction of ubiquinone-1 to ubiquinol by two successive reactions, coupled with the transport of Na(+) ions from the cytoplasm to the periplasm. NqrA to NqrE are probably involved in the second step, the conversion of ubisemiquinone to ubiquinol. The protein is Na(+)-translocating NADH-quinone reductase subunit A of Klebsiella pneumoniae (strain 342).